The primary structure comprises 104 residues: Iron-sulfur cluster assembly protein CyaY (104 aa).

This sequence belongs to the frataxin family.

Its function is as follows. Involved in iron-sulfur (Fe-S) cluster assembly. May act as a regulator of Fe-S biogenesis. The polypeptide is Iron-sulfur cluster assembly protein CyaY (Vibrio parahaemolyticus serotype O3:K6 (strain RIMD 2210633)).